Here is a 241-residue protein sequence, read N- to C-terminus: ATP synthase subunit a (241 aa).

6 helical membrane-spanning segments follow: residues 19 to 39, 80 to 100, 106 to 126, 135 to 155, 177 to 197, and 203 to 223; these read AVLI…AKMA, LVAA…IPGF, NINV…YEGI, FAHF…IEIV, LFLW…AYLL, and LLQT…AVAI.

It belongs to the ATPase A chain family. As to quaternary structure, F-type ATPases have 2 components, CF(1) - the catalytic core - and CF(0) - the membrane proton channel. CF(1) has five subunits: alpha(3), beta(3), gamma(1), delta(1), epsilon(1). CF(0) has three main subunits: a(1), b(2) and c(9-12). The alpha and beta chains form an alternating ring which encloses part of the gamma chain. CF(1) is attached to CF(0) by a central stalk formed by the gamma and epsilon chains, while a peripheral stalk is formed by the delta and b chains.

The protein localises to the cell inner membrane. Its function is as follows. Key component of the proton channel; it plays a direct role in the translocation of protons across the membrane. The protein is ATP synthase subunit a of Sulfurovum sp. (strain NBC37-1).